We begin with the raw amino-acid sequence, 225 residues long: UPF0758 protein Sez_1052 (225 aa).

Residues 102-224 (PVLSSAQVAE…YYSFREKSDL (123 aa)) enclose the MPN domain. Positions 173, 175, and 186 each coordinate Zn(2+). The short motif at 173 to 186 (HNHPSGLTKPSAND) is the JAMM motif element.

This sequence belongs to the UPF0758 family.

This Streptococcus equi subsp. zooepidemicus (strain MGCS10565) protein is UPF0758 protein Sez_1052.